The following is a 251-amino-acid chain: 1-(5-phosphoribosyl)-5-[(5-phosphoribosylamino)methylideneamino] imidazole-4-carboxamide isomerase (251 aa).

D8 functions as the Proton acceptor in the catalytic mechanism. D129 functions as the Proton donor in the catalytic mechanism.

Belongs to the HisA/HisF family.

The protein localises to the cytoplasm. The enzyme catalyses 1-(5-phospho-beta-D-ribosyl)-5-[(5-phospho-beta-D-ribosylamino)methylideneamino]imidazole-4-carboxamide = 5-[(5-phospho-1-deoxy-D-ribulos-1-ylimino)methylamino]-1-(5-phospho-beta-D-ribosyl)imidazole-4-carboxamide. Its pathway is amino-acid biosynthesis; L-histidine biosynthesis; L-histidine from 5-phospho-alpha-D-ribose 1-diphosphate: step 4/9. The protein is 1-(5-phosphoribosyl)-5-[(5-phosphoribosylamino)methylideneamino] imidazole-4-carboxamide isomerase of Desulfosudis oleivorans (strain DSM 6200 / JCM 39069 / Hxd3) (Desulfococcus oleovorans).